The primary structure comprises 260 residues: Shikimate dehydrogenase (NADP(+)) (260 aa).

Shikimate-binding positions include 14 to 16 (SAS) and T60. K64 (proton acceptor) is an active-site residue. Positions 85 and 100 each coordinate shikimate. NADP(+)-binding positions include 121–125 (GAGGA), 145–150 (NRTYER), and F201. Y203 lines the shikimate pocket. An NADP(+)-binding site is contributed by G225.

This sequence belongs to the shikimate dehydrogenase family. Homodimer.

The enzyme catalyses shikimate + NADP(+) = 3-dehydroshikimate + NADPH + H(+). It participates in metabolic intermediate biosynthesis; chorismate biosynthesis; chorismate from D-erythrose 4-phosphate and phosphoenolpyruvate: step 4/7. In terms of biological role, involved in the biosynthesis of the chorismate, which leads to the biosynthesis of aromatic amino acids. Catalyzes the reversible NADPH linked reduction of 3-dehydroshikimate (DHSA) to yield shikimate (SA). The polypeptide is Shikimate dehydrogenase (NADP(+)) (Pyrobaculum neutrophilum (strain DSM 2338 / JCM 9278 / NBRC 100436 / V24Sta) (Thermoproteus neutrophilus)).